Reading from the N-terminus, the 309-residue chain is Epidermal retinol dehydrogenase 2 (309 aa).

Residues leucine 11 to leucine 31 form a helical membrane-spanning segment. An NADP(+)-binding site is contributed by leucine 44–valine 68. Residue serine 177 coordinates substrate. Catalysis depends on tyrosine 190, which acts as the Proton acceptor. The chain crosses the membrane as a helical span at residues leucine 270–alanine 290.

This sequence belongs to the short-chain dehydrogenases/reductases (SDR) family. As to expression, detected in adult lung. Detected at low levels in adult brain, heart, testis, placenta, cervix, pancreas, uterus, stomach, rectum, small intestine, colon, esophagus, thymus, skin, and skin keratinocyte. Expression is higher in psoriasis lesions relative to unaffected skin from psoriasis patients. Detected in fetal kidney, skin and lung.

Its subcellular location is the endoplasmic reticulum membrane. It carries out the reaction all-trans-retinol--[retinol-binding protein] + NAD(+) = all-trans-retinal--[retinol-binding protein] + NADH + H(+). Its pathway is cofactor metabolism; retinol metabolism. Functionally, oxidoreductase with strong preference for NAD. Active in both the oxidative and reductive directions. Oxidizes all-trans-retinol in all-trans-retinaldehyde. No activity was detected with 11-cis-retinol or 11-cis-retinaldehyde as substrates with either NAD(+)/NADH or NADP(+)/NADPH. The protein is Epidermal retinol dehydrogenase 2 of Homo sapiens (Human).